We begin with the raw amino-acid sequence, 87 residues long: Defensin-like protein 81 (87 aa).

Residues Met1–Gly27 form the signal peptide. Intrachain disulfides connect Cys33-Cys69, Cys37-Cys57, Cys43-Cys67, and Cys47-Cys68.

The protein belongs to the DEFL family.

The protein resides in the secreted. The sequence is that of Defensin-like protein 81 from Arabidopsis thaliana (Mouse-ear cress).